A 515-amino-acid polypeptide reads, in one-letter code: Cytochrome P450 monooxygenase janP (515 aa).

A helical transmembrane segment spans residues 20-36; it reads GFLWKYAAFMVFIYLLL. A heme-binding site is contributed by Cys456. Residue Asn501 is glycosylated (N-linked (GlcNAc...) asparagine).

Belongs to the cytochrome P450 family. Heme serves as cofactor.

The protein resides in the membrane. Its pathway is secondary metabolite biosynthesis. Its function is as follows. Cytochrome P450 monooxygenase; part of the gene cluster that mediates the biosynthesis of the indole diterpenes janthitremanes such as shearinine K or shearinine A. The geranylgeranyl diphosphate (GGPP) synthase janG catalyzes the first step in janthitremane biosynthesis via conversion of farnesyl pyrophosphate and isopentyl pyrophosphate into geranylgeranyl pyrophosphate (GGPP). Condensation of indole-3-glycerol phosphate with GGPP by the prenyl transferase janC then forms 3-geranylgeranylindole (3-GGI). Epoxidation by the FAD-dependent monooxygenase janM leads to a epoxidized-GGI that is substrate of the terpene cyclase janB for cyclization to yield paspaline. Paspaline is subsequently converted to 13-desoxypaspaline by the cytochrome P450 monooxygenase janP, via beta-PC-M6 in a series of alpha-face oxidations. The cytochrome P450 monooxygenase janQ is proposed to carry out sequential beta-face oxidation steps at C-7 and C-13 of 13-desoxypaspaline to form paspalicine and paspalinine respectively. The indole diterpene prenyltransferase janD may then convert paspalinine into shearinine K which is substrate of janO and/or additional enzymes for oxidation and cyclization to generate shearinine A. The protein is Cytochrome P450 monooxygenase janP of Penicillium janthinellum (Penicillium vitale).